Here is a 1255-residue protein sequence, read N- to C-terminus: Protein diaphanous homolog 1 (1255 aa).

M1 carries the N-acetylmethionine modification. Over residues 1-12 (MEPSGGGLGPGR) the composition is skewed to gly residues. Positions 1–73 (MEPSGGGLGP…ASYGDDPTAQ (73 aa)) are disordered. S22 bears the Phosphoserine mark. The segment covering 58-73 (AHRNSSASYGDDPTAQ) has biased composition (polar residues). The 366-residue stretch at 75-440 (LQDISDEQVL…QIVLHKNGTD (366 aa)) folds into the GBD/FH3 domain. A coiled-coil region spans residues 460–562 (IDKTKVEKSE…MASLSAVVVA (103 aa)). The interval 567 to 737 (SSAAVPPAPP…MGVPPPPPFG (171 aa)) is disordered. A compositionally biased stretch (pro residues) spans 585-736 (IPPPPPPPPL…GMGVPPPPPF (152 aa)). An FH1 domain is found at 586-747 (PPPPPPPPLP…FGVPAAPVLP (162 aa)). T751 carries the phosphothreonine modification. The FH2 domain maps to 752–1154 (PKKVYKPEVQ…MRRAKLAKEK (403 aa)). A coiled-coil region spans residues 1027-1179 (VEKASRVSAE…IDMNAEGDET (153 aa)). Residues K1040 and K1086 each carry the N6-acetyllysine modification. Y1104 carries the post-translational modification Phosphotyrosine. In terms of domain architecture, DAD spans 1177-1205 (DETGVMDSLLEALQSGAAFRRKRGPRQVN). Phosphoserine is present on S1237.

This sequence belongs to the formin homology family. Diaphanous subfamily. In terms of assembly, homodimer. Interacts with the GTP-bound form of RHOA. Interacts with RHOC, PFY1, MAPRE1, BAIAP2 and APC. Interacts with APC; acts as a scaffold protein for MAPRE1 and APC to stabilize microtubules and promote cell migration. Interacts with SCAI. Interacts with DCAF7, via FH2 domain. Interacts with NCDN. Interacts with OSBPL10, OSBPL2, VIM, TUBB and DYN1. Post-translationally, phosphorylation at Thr-751 is stimulated by cAMP and regulates stability, complex formation and mitochondrial movement. In terms of tissue distribution, widely expressed. In the organ of Corti, it is expressed at the outer and inner hair cell layers. Expression at the inner hair cell layer is restricted to inner pillar cells. Detected in cochlear spiral ganglion neurons.

It is found in the cell membrane. Its subcellular location is the cell projection. It localises to the ruffle membrane. The protein resides in the cytoplasm. The protein localises to the cytoskeleton. It is found in the microtubule organizing center. Its subcellular location is the centrosome. It localises to the spindle. The protein resides in the nucleus. Its function is as follows. Actin nucleation and elongation factor required for the assembly of F-actin structures, such as actin cables and stress fibers. Binds to the barbed end of the actin filament and slows down actin polymerization and depolymerization. Required for cytokinesis, and transcriptional activation of the serum response factor. DFR proteins couple Rho and Src tyrosine kinase during signaling and the regulation of actin dynamics. Functions as a scaffold protein for MAPRE1 and APC to stabilize microtubules and promote cell migration. Has neurite outgrowth promoting activity. Acts in a Rho-dependent manner to recruit PFY1 to the membrane. The MEMO1-RHOA-DIAPH1 signaling pathway plays an important role in ERBB2-dependent stabilization of microtubules at the cell cortex. It controls the localization of APC and CLASP2 to the cell membrane, via the regulation of GSK3B activity. In turn, membrane-bound APC allows the localization of the MACF1 to the cell membrane, which is required for microtubule capture and stabilization. Plays a role in the regulation of cell morphology and cytoskeletal organization. Required in the control of cell shape. Also acts as an actin nucleation and elongation factor in the nucleus by promoting nuclear actin polymerization inside the nucleus to drive serum-dependent SRF-MRTFA activity. The polypeptide is Protein diaphanous homolog 1 (Diaph1) (Mus musculus (Mouse)).